Here is a 194-residue protein sequence, read N- to C-terminus: Peptidyl-tRNA hydrolase (194 aa).

Tyrosine 16 provides a ligand contact to tRNA. Histidine 21 acts as the Proton acceptor in catalysis. Phenylalanine 67, asparagine 69, and asparagine 115 together coordinate tRNA.

The protein belongs to the PTH family. Monomer.

Its subcellular location is the cytoplasm. The catalysed reaction is an N-acyl-L-alpha-aminoacyl-tRNA + H2O = an N-acyl-L-amino acid + a tRNA + H(+). Hydrolyzes ribosome-free peptidyl-tRNAs (with 1 or more amino acids incorporated), which drop off the ribosome during protein synthesis, or as a result of ribosome stalling. In terms of biological role, catalyzes the release of premature peptidyl moieties from peptidyl-tRNA molecules trapped in stalled 50S ribosomal subunits, and thus maintains levels of free tRNAs and 50S ribosomes. This chain is Peptidyl-tRNA hydrolase, found in Salmonella paratyphi B (strain ATCC BAA-1250 / SPB7).